The primary structure comprises 219 residues: Guanylate kinase (219 aa).

Residues 15-194 enclose the Guanylate kinase-like domain; it reads GLMFVLSSPS…AFAEVQSILK (180 aa). Position 22–29 (22–29) interacts with ATP; sequence SPSGAGKT.

It belongs to the guanylate kinase family.

Its subcellular location is the cytoplasm. The catalysed reaction is GMP + ATP = GDP + ADP. In terms of biological role, essential for recycling GMP and indirectly, cGMP. This is Guanylate kinase from Nitrobacter hamburgensis (strain DSM 10229 / NCIMB 13809 / X14).